A 188-amino-acid chain; its full sequence is Elongation factor P (188 aa).

The protein belongs to the elongation factor P family.

It localises to the cytoplasm. Its pathway is protein biosynthesis; polypeptide chain elongation. Involved in peptide bond synthesis. Stimulates efficient translation and peptide-bond synthesis on native or reconstituted 70S ribosomes in vitro. Probably functions indirectly by altering the affinity of the ribosome for aminoacyl-tRNA, thus increasing their reactivity as acceptors for peptidyl transferase. The chain is Elongation factor P from Nitrobacter winogradskyi (strain ATCC 25391 / DSM 10237 / CIP 104748 / NCIMB 11846 / Nb-255).